The primary structure comprises 242 residues: Ribonuclease PH (242 aa).

Residues R87 and 125–127 (GTR) each bind phosphate.

Belongs to the RNase PH family. In terms of assembly, homohexameric ring arranged as a trimer of dimers.

The enzyme catalyses tRNA(n+1) + phosphate = tRNA(n) + a ribonucleoside 5'-diphosphate. Phosphorolytic 3'-5' exoribonuclease that plays an important role in tRNA 3'-end maturation. Removes nucleotide residues following the 3'-CCA terminus of tRNAs; can also add nucleotides to the ends of RNA molecules by using nucleoside diphosphates as substrates, but this may not be physiologically important. Probably plays a role in initiation of 16S rRNA degradation (leading to ribosome degradation) during starvation. This chain is Ribonuclease PH, found in Thermosynechococcus vestitus (strain NIES-2133 / IAM M-273 / BP-1).